The sequence spans 502 residues: Premnaspirodiene oxygenase (502 aa).

The chain crosses the membrane as a helical span at residues 2–22; sequence QFFSLVSIFLFLSFLFLLRKW. C440 contributes to the heme binding site.

This sequence belongs to the cytochrome P450 family. It depends on heme as a cofactor.

It localises to the membrane. It carries out the reaction (-)-vetispiradiene + 2 reduced [NADPH--hemoprotein reductase] + 2 O2 = solavetivone + 2 oxidized [NADPH--hemoprotein reductase] + 3 H2O + 2 H(+). Involved in the biosynthesis of solavetivone, a potent antifungal phytoalexin. Catalyzes the successive and independent hydroxylations of premnaspirodiene and solavetivol. The first hydroxylation step is 3-fold more efficient than the second hydroxylation reaction. This chain is Premnaspirodiene oxygenase (CYP71D55), found in Hyoscyamus muticus (Egyptian henbane).